The primary structure comprises 446 residues: tRNA-2-methylthio-N(6)-dimethylallyladenosine synthase (446 aa).

Residues 3-124 enclose the MTTase N-terminal domain; it reads KKLYIKTYGC…LPELISKVVR (122 aa). Cys12, Cys48, Cys87, Cys162, Cys166, and Cys169 together coordinate [4Fe-4S] cluster. The 233-residue stretch at 148–380 folds into the Radical SAM core domain; it reads YPQGASSFIS…QKELAAQQLA (233 aa). The TRAM domain occupies 383–446; that stretch reads ESCIGSTMKV…LNSLSGEIYR (64 aa).

This sequence belongs to the methylthiotransferase family. MiaB subfamily. In terms of assembly, monomer. [4Fe-4S] cluster serves as cofactor.

The protein localises to the cytoplasm. The catalysed reaction is N(6)-dimethylallyladenosine(37) in tRNA + (sulfur carrier)-SH + AH2 + 2 S-adenosyl-L-methionine = 2-methylsulfanyl-N(6)-dimethylallyladenosine(37) in tRNA + (sulfur carrier)-H + 5'-deoxyadenosine + L-methionine + A + S-adenosyl-L-homocysteine + 2 H(+). Its function is as follows. Catalyzes the methylthiolation of N6-(dimethylallyl)adenosine (i(6)A), leading to the formation of 2-methylthio-N6-(dimethylallyl)adenosine (ms(2)i(6)A) at position 37 in tRNAs that read codons beginning with uridine. The protein is tRNA-2-methylthio-N(6)-dimethylallyladenosine synthase of Rickettsia bellii (strain RML369-C).